Here is a 692-residue protein sequence, read N- to C-terminus: Elongation factor G (692 aa).

A tr-type G domain is found at 8–283 (DHVRNIGIMA…AVVDYFPSPS (276 aa)). GTP-binding positions include 17-24 (AHIDAGKT), 81-85 (DTPGH), and 135-138 (NKMD).

The protein belongs to the TRAFAC class translation factor GTPase superfamily. Classic translation factor GTPase family. EF-G/EF-2 subfamily.

The protein resides in the cytoplasm. Its function is as follows. Catalyzes the GTP-dependent ribosomal translocation step during translation elongation. During this step, the ribosome changes from the pre-translocational (PRE) to the post-translocational (POST) state as the newly formed A-site-bound peptidyl-tRNA and P-site-bound deacylated tRNA move to the P and E sites, respectively. Catalyzes the coordinated movement of the two tRNA molecules, the mRNA and conformational changes in the ribosome. The sequence is that of Elongation factor G from Magnetococcus marinus (strain ATCC BAA-1437 / JCM 17883 / MC-1).